Consider the following 415-residue polypeptide: uncharacterized protein (415 aa).

Residues Cys-66, Cys-72, Cys-75, and Cys-149 each coordinate [4Fe-4S] cluster. Residues Gln-249, Phe-276, Glu-296, and Asp-344 each contribute to the S-adenosyl-L-methionine site. The Nucleophile role is filled by Cys-370.

The protein belongs to the class I-like SAM-binding methyltransferase superfamily. RNA M5U methyltransferase family.

This is an uncharacterized protein from Brucella suis biovar 1 (strain 1330).